The following is a 136-amino-acid chain: MTERTLVLIKPDAVERQLIGEIISRIERKGLTIAALELRQVGEELASQHYAEHESKPFFGSLLEFITSGPVMAAIVEGPRAVAAVRQLTGGTDPVEKAAPGTIRGDLALETQFNLVHGSDSTASAQREIALWFPGI.

Positions 10, 58, 86, 92, 104, and 114 each coordinate ATP. The Pros-phosphohistidine intermediate role is filled by H117.

The protein belongs to the NDK family. In terms of assembly, homotetramer. It depends on Mg(2+) as a cofactor.

It is found in the cytoplasm. The enzyme catalyses a 2'-deoxyribonucleoside 5'-diphosphate + ATP = a 2'-deoxyribonucleoside 5'-triphosphate + ADP. It catalyses the reaction a ribonucleoside 5'-diphosphate + ATP = a ribonucleoside 5'-triphosphate + ADP. Major role in the synthesis of nucleoside triphosphates other than ATP. The ATP gamma phosphate is transferred to the NDP beta phosphate via a ping-pong mechanism, using a phosphorylated active-site intermediate. The polypeptide is Nucleoside diphosphate kinase (Mycobacterium leprae (strain TN)).